We begin with the raw amino-acid sequence, 631 residues long: Putative meiotic phospholipase SPO1 (631 aa).

The first 17 residues, 1–17 (MQKLLFVFSVLLTVVLA), serve as a signal peptide directing secretion. Positions 24–67 (QCPSSPLIREAKHELCPEETLYLKKKKIKTKNKLIQFLKSLTEA) are required for lipid-binding and function in meiosis. The PLA2c domain occupies 24–631 (QCPSSPLIRE…LQCFKDYCYS (608 aa)). Residues Asn233, Asn293, and Asn303 are each glycosylated (N-linked (GlcNAc...) asparagine). A helical membrane pass occupies residues 376–396 (FITATSSSIFNNVLIFIWNLA). 5 N-linked (GlcNAc...) asparagine glycosylation sites follow: Asn500, Asn536, Asn560, Asn563, and Asn572.

This sequence belongs to the lysophospholipase family. Interacts with SPO23. Post-translationally, glycosylated.

The protein resides in the endoplasmic reticulum membrane. It is found in the nucleus membrane. Its function is as follows. Regulates spindle pole duplication in meiosis I, but not in mitosis. Required for meiosis I, meiosis II chromosome segregation and spore formation. Binds phosphatidylinositol (4)P mono- and polyphosphates. This Saccharomyces cerevisiae (strain ATCC 204508 / S288c) (Baker's yeast) protein is Putative meiotic phospholipase SPO1 (SPO1).